A 620-amino-acid polypeptide reads, in one-letter code: Probable potassium transport system protein Kup 1 (620 aa).

12 helical membrane-spanning segments follow: residues 7–27 (GIGL…TSPL), 50–70 (VLSL…VIVI), 102–122 (MMLG…TPAI), 136–156 (PDLK…LFAI), 168–188 (FGPV…ANIV), 211–231 (LMSF…EALY), 246–266 (WFGL…ALLI), 284–304 (MVVP…QAVI), 336–356 (IYVP…VVGF), 368–388 (IAVT…AALL), 393–413 (PVVV…FFAA), and 415–435 (IIKV…SFTV).

The protein belongs to the HAK/KUP transporter (TC 2.A.72) family.

The protein resides in the cell inner membrane. The enzyme catalyses K(+)(in) + H(+)(in) = K(+)(out) + H(+)(out). Functionally, transport of potassium into the cell. Likely operates as a K(+):H(+) symporter. In Rhodopseudomonas palustris (strain ATCC BAA-98 / CGA009), this protein is Probable potassium transport system protein Kup 1.